A 337-amino-acid polypeptide reads, in one-letter code: MFGYLQLINPTTDIYIKDYGNFSGIVAHQAYDPVRRDHMLLRSMKLHFGPNSKLLWLGDFHAITLSHANMIFGASSVGFKGVNVSTLPPDTLTTGIRPRPVVTMDFAQLKGFYSDLAQKEDYIMYFHDMVKFVSQTGGAPVSLRDVFLWISESVTGPVVIRTDCVTGCNNLWPSGSGHFYFPYERKTKFRYGTFVECGKNLTWSEGPQWDVKSYVVGFNFVTRANSLLGGGFDEVCYRLMMQAEVPRQVAEQGLTLEQAVRKLASEHHMSRPQLTSRRVPGITDQTKYEAYVVCGPFRTGQVVADSLQMAEDLAWREMLGTLKTLIHDEARQTKGCC.

Its subcellular location is the virion. The protein localises to the host cytoplasm. The protein is Structural protein VP9 of Colorado tick fever virus (strain USA/Florio N-7180) (CTFV).